Consider the following 487-residue polypeptide: GTPase Der (487 aa).

The region spanning 2-166 is the EngA-type G 1 domain; that stretch reads LKIAILGRPN…RIKLVANLPE (165 aa). GTP is bound by residues 8 to 15, 55 to 59, and 118 to 121; these read GRPNVGKS, DTGGV, and NKAD. The tract at residues 165–194 is disordered; it reads PEPREEEEEGLEELSVDEHEESEAALPSNT. Acidic residues predominate over residues 168–187; the sequence is REEEEEGLEELSVDEHEESE. The EngA-type G 2 domain maps to 225 to 398; that stretch reads LKIALIGRPN…AIDELHHVVS (174 aa). GTP is bound by residues 231–238, 278–282, and 343–346; these read GRPNVGKS, DTAGL, and NKWD. A KH-like domain is found at 399-483; sequence NKVPTPIVNK…PFDLEFKEKP (85 aa).

Belongs to the TRAFAC class TrmE-Era-EngA-EngB-Septin-like GTPase superfamily. EngA (Der) GTPase family. Associates with the 50S ribosomal subunit.

Its function is as follows. GTPase that plays an essential role in the late steps of ribosome biogenesis. In Chlamydia pneumoniae (Chlamydophila pneumoniae), this protein is GTPase Der.